Here is a 450-residue protein sequence, read N- to C-terminus: UPF0210 protein CPE1497 (450 aa).

It belongs to the UPF0210 family. In terms of assembly, homodimer.

This chain is UPF0210 protein CPE1497, found in Clostridium perfringens (strain 13 / Type A).